Reading from the N-terminus, the 436-residue chain is GTPase Der (436 aa).

2 consecutive EngA-type G domains span residues 4–167 and 176–351; these read PVVA…PKEE and VKFS…DNHS. Residues 10–17, 57–61, 119–122, 182–189, 229–233, and 294–297 each bind GTP; these read GRPNVGKS, DTGGI, NKVD, DTAGM, and NKWD. Positions 352–436 constitute a KH-like domain; that stretch reads LRVQSSMLND…PIRVIARKRK (85 aa).

It belongs to the TRAFAC class TrmE-Era-EngA-EngB-Septin-like GTPase superfamily. EngA (Der) GTPase family. As to quaternary structure, associates with the 50S ribosomal subunit.

Functionally, GTPase that plays an essential role in the late steps of ribosome biogenesis. This is GTPase Der from Listeria welshimeri serovar 6b (strain ATCC 35897 / DSM 20650 / CCUG 15529 / CIP 8149 / NCTC 11857 / SLCC 5334 / V8).